The sequence spans 135 residues: UPF0251 protein Hore_18270 (135 aa).

This sequence belongs to the UPF0251 family.

This Halothermothrix orenii (strain H 168 / OCM 544 / DSM 9562) protein is UPF0251 protein Hore_18270.